The primary structure comprises 747 residues: Putative T-box protein 31 (747 aa).

The segment at residues glutamine 33–aspartate 199 is a DNA-binding region (T-box). Disordered regions lie at residues serine 268–aspartate 289 and serine 332–lysine 364. Residues serine 332–serine 358 are compositionally biased toward polar residues.

Its subcellular location is the nucleus. The chain is Putative T-box protein 31 (tbx-31) from Caenorhabditis elegans.